Here is a 311-residue protein sequence, read N- to C-terminus: Thioredoxin reductase (311 aa).

35-42 (ERGIPGGQ) serves as a coordination point for FAD. Residues Cys134 and Cys137 are joined by a disulfide bond. FAD is bound at residue 277 to 286 (DVRDKGLRQI).

It belongs to the class-II pyridine nucleotide-disulfide oxidoreductase family. As to quaternary structure, homodimer. Requires FAD as cofactor.

It localises to the cytoplasm. The enzyme catalyses [thioredoxin]-dithiol + NADP(+) = [thioredoxin]-disulfide + NADPH + H(+). This chain is Thioredoxin reductase (trxB), found in Staphylococcus aureus (strain COL).